Consider the following 310-residue polypeptide: Beta-1,3-galactosyltransferase 5 (310 aa).

The Cytoplasmic portion of the chain corresponds to 1–7; that stretch reads MAFPKMR. A helical; Signal-anchor for type II membrane protein transmembrane segment spans residues 8–28; the sequence is LMYICLLVLGALCLYFSMYSL. Over 29–310 the chain is Lumenal; sequence NPFKEQSFVY…NSRGEDCPPV (282 aa). 3 N-linked (GlcNAc...) asparagine glycosylation sites follow: N130, N174, and N231.

Belongs to the glycosyltransferase 31 family. Expressed in stomach, jejunum, colon, pancreas, small intestine, testis and gastrointestinal and pancreatic cancer cell lines. Hardly detected in lung, liver, adrenal gland and peripheral blood leukocytes.

The protein localises to the golgi apparatus membrane. It catalyses the reaction a globoside Gb4Cer (d18:1(4E)) + UDP-alpha-D-galactose = a globoside GalGb4Cer (d18:1(4E)) + UDP + H(+). Its pathway is protein modification; protein glycosylation. Its function is as follows. Catalyzes the transfer of Gal to GlcNAc-based acceptors with a preference for the core3 O-linked glycan GlcNAc(beta1,3)GalNAc structure. Can use glycolipid LC3Cer as an efficient acceptor. The sequence is that of Beta-1,3-galactosyltransferase 5 from Homo sapiens (Human).